A 238-amino-acid chain; its full sequence is MKNKRSQNSPYITNSPYATLEKALGYSFKDKRLLEQALTHKSCKLALNNERLEFLGDAVLGLVIGELLYHKFYQYDEGKLSKLRASIVSAHGFTKLAKVIALQDYLHISSSEEISNGREKPSILSSAFEALMAGVYLEAGLAKVQKIIQNLLNRAYKRLDLEHLFMDYKTALQELTQAQFCVIPTYQLLKEKGPDHHKEFEMALYIQDKIYATAKGKSKKEAEQQCAYQALQKLKEVK.

The RNase III domain occupies 17-140 (YATLEKALGY…LMAGVYLEAG (124 aa)). Glu53 serves as a coordination point for Mg(2+). Residue Asp57 is part of the active site. Ser126 and Glu129 together coordinate Mg(2+). Residue Glu129 is part of the active site. Residues 167–236 (DYKTALQELT…AYQALQKLKE (70 aa)) form the DRBM domain.

Belongs to the ribonuclease III family. Homodimer. The cofactor is Mg(2+).

Its subcellular location is the cytoplasm. It carries out the reaction Endonucleolytic cleavage to 5'-phosphomonoester.. Functionally, digests double-stranded RNA. Involved in the processing of primary rRNA transcript to yield the immediate precursors to the large and small rRNAs (23S and 16S). Processes some mRNAs, and tRNAs when they are encoded in the rRNA operon. Processes pre-crRNA and tracrRNA of type II CRISPR loci if present in the organism. The chain is Ribonuclease 3 from Helicobacter pylori (strain Shi470).